A 285-amino-acid polypeptide reads, in one-letter code: Putative hydrolase DDAH2 (285 aa).

Catalysis depends on H171, which acts as the Proton donor. The active-site Nucleophile is C276.

It belongs to the DDAH family. In terms of processing, phosphorylated by TBK1. Phosphorylation inhibits the translocation into the mitochondrion upon Sendai viral infection. As to expression, detected in heart, placenta, lung, liver, skeletal muscle, kidney and pancreas, and at very low levels in brain.

Its subcellular location is the cytoplasm. The protein localises to the mitochondrion. Functionally, putative hydrolase with unknown substrate. Does not hydrolyze N(G),N(G)-dimethyl-L-arginine (ADMA) which acts as an inhibitor of NOS. In endothelial cells, induces expression of vascular endothelial growth factor (VEGF) via phosphorylation of the transcription factor SP1 by PKA in a process that is independent of NO and NO synthase. Similarly, enhances pancreatic insulin secretion through SP1-mediated transcriptional up-regulation of secretagogin/SCGN, an insulin vesicle docking protein. Upon viral infection, relocates to mitochondria where it promotes mitochondrial fission through activation of DNM1L leading to the inhibition of innate response activation mediated by MAVS. The chain is Putative hydrolase DDAH2 from Homo sapiens (Human).